A 152-amino-acid chain; its full sequence is FMN reductase (NADH) RutF (152 aa).

Belongs to the non-flavoprotein flavin reductase family. RutF subfamily.

It carries out the reaction FMNH2 + NAD(+) = FMN + NADH + 2 H(+). Its function is as follows. Catalyzes the reduction of FMN to FMNH2 which is used to reduce pyrimidine by RutA via the Rut pathway. In Shigella sonnei (strain Ss046), this protein is FMN reductase (NADH) RutF.